Consider the following 130-residue polypeptide: Small ribosomal subunit protein uS9 (130 aa).

This sequence belongs to the universal ribosomal protein uS9 family.

The polypeptide is Small ribosomal subunit protein uS9 (Teredinibacter turnerae (strain ATCC 39867 / T7901)).